The chain runs to 89 residues: Small ribosomal subunit protein uS15 (89 aa).

Belongs to the universal ribosomal protein uS15 family. In terms of assembly, part of the 30S ribosomal subunit. Forms a bridge to the 50S subunit in the 70S ribosome, contacting the 23S rRNA.

One of the primary rRNA binding proteins, it binds directly to 16S rRNA where it helps nucleate assembly of the platform of the 30S subunit by binding and bridging several RNA helices of the 16S rRNA. In terms of biological role, forms an intersubunit bridge (bridge B4) with the 23S rRNA of the 50S subunit in the ribosome. This chain is Small ribosomal subunit protein uS15, found in Hahella chejuensis (strain KCTC 2396).